The chain runs to 1094 residues: Formin-like protein 1 (1094 aa).

3 disordered regions span residues 1–29 (MGNAAGSAEQPAGPTASPPKQPAVPKQPM), 173–199 (SGAEKSKPLDQSVEDLSKAPPSSVPKS), and 507–627 (AATP…GVKA). Gly-2 carries N-myristoyl glycine lipidation. A Phosphoserine modification is found at Ser-7. The span at 16–28 (ASPPKQPAVPKQP) shows a compositional bias: pro residues. The region spanning 27 to 464 (QPMPAAGELE…SRRIPEPEKV (438 aa)) is the GBD/FH3 domain. Position 184 is a phosphoserine (Ser-184). Residues 519–529 (RVSTDSPSTAE) show a composition bias toward polar residues. Composition is skewed to pro residues over residues 535 to 549 (ASPPPPPPPPPPPLP) and 559 to 610 (PSAP…PGGP). Positions 627-1018 (AKKPIQTKFR…DTSGREEPPT (392 aa)) constitute an FH2 domain. Ser-688 is subject to Phosphoserine. The segment covering 1002–1017 (WKKEAAADTSGREEPP) has biased composition (basic and acidic residues). A disordered region spans residues 1002–1094 (WKKEAAADTS…PLPVTTDLAL (93 aa)). Ser-1021 carries the post-translational modification Phosphoserine. A DAD domain is found at 1049-1082 (SDRDGAIEDIITDLRNQPYIRADTGRRSARRRPP).

This sequence belongs to the formin homology family. Interacts with RAC1, PFN1 and PFN2. Interacts (activated by RAC1) with SRGAP2 (via SH3 domain); regulates the actin filament severing activity of FMNL1. In terms of processing, myristoylation mediates membrane localization. Highly expressed in the spleen, lymph node and bone marrow cells.

The protein resides in the cytoplasm. The protein localises to the cell membrane. Its subcellular location is the cytoplasmic vesicle. It is found in the phagosome. Plays a role in the regulation of cell morphology and cytoskeletal organization. Required in the cortical actin filament dynamics and cell shape. May play a role in the control of cell motility and survival of macrophages. The protein is Formin-like protein 1 (Fmnl1) of Mus musculus (Mouse).